The primary structure comprises 349 residues: N-acetyltaurine hydrolase (349 aa).

A divalent metal cation is bound by residues His26, His28, Glu169, His201, His230, and Asp298.

This sequence belongs to the metallo-dependent hydrolases superfamily. Phosphotriesterase family. A divalent metal cation is required as a cofactor. As to expression, expressed primarily in proximal tubules of the kidney.

The protein resides in the cytoplasm. The protein localises to the cytosol. The enzyme catalyses N-acetyltaurine + H2O = taurine + acetate. It catalyses the reaction N-propanoyltaurine + H2O = propanoate + taurine. It carries out the reaction N-acetyl-L-methionine + H2O = L-methionine + acetate. The catalysed reaction is N-acetyl-L-isoleucine + H2O = L-isoleucine + acetate. The enzyme catalyses N-acetyl-L-leucine + H2O = L-leucine + acetate. It catalyses the reaction N-acetyl-L-valine + H2O = L-valine + acetate. Functionally, N-acetyltaurine hydrolase that regulates feeding by catalyzing the hydrolysis of N-acetyltaurine into taurine and acetate. N-acetyltaurine has anorexigenic and anti-obesity effects that are dependent on GFRAL receptor and GDF15. PTER also acts on other N-acetyl amino acids (Met, Ile, Leu, Val) and N-propionyltaurine, but at lower rates. Binds resiniferotoxin, a vanilloid that desensitizes nociceptive neurons. In Rattus norvegicus (Rat), this protein is N-acetyltaurine hydrolase.